We begin with the raw amino-acid sequence, 501 residues long: MTDIQNKNYIIALDQGTTSSRAIIFDRDANVVCTAQREFAQHYPQAGWVEHDPMEIFATQSAVMVEALAQAGLHHDQVAAIGITNQRETTVVWDKNTGRPIYNAIVWQCRRSTEICQQLKRDGLEDYIRETTGLVTDPYFSGTKLKWILDNVEGSRERARNGELLFGTIDSWLIWKFTGGKTHVTDYTNASRTMLFNIHTLEWDAKMLEVLDIPREMLPEVKSSSEIYGRTKSGIAIGGIAGDQQAALFGQMCVEPGQAKNTYGTGCFLLMNTGDKAVKSQHGMLTTIACGPSGEVAYALEGAVFNGGSTVQWLRDELKIINDAHDTEYFAGKVKDSNGVYLVPAFTGLGAPYWDPYARGALFGLTRGVRVDHIIRAALESIAYQTRDVLDAMQQDSGERLKALRVDGGAVANNFLMQFQADILGTQVERPQMRETTALGAAYLAGLACGFWGSLEELRGKAVIEREFEPQLAEAEKEGLYAGWKKAVSRTRDWEPHDEAK.

T17 is a binding site for ADP. ATP-binding residues include T17, T18, and S19. T17 contacts sn-glycerol 3-phosphate. R21 provides a ligand contact to ADP. Positions 87, 88, 139, and 243 each coordinate sn-glycerol 3-phosphate. Glycerol contacts are provided by R87, E88, Y139, D243, and Q244. Positions 265 and 308 each coordinate ADP. Residues T265, G308, Q312, and G409 each coordinate ATP. ADP is bound by residues G409 and N413.

The protein belongs to the FGGY kinase family.

It carries out the reaction glycerol + ATP = sn-glycerol 3-phosphate + ADP + H(+). Its pathway is polyol metabolism; glycerol degradation via glycerol kinase pathway; sn-glycerol 3-phosphate from glycerol: step 1/1. Inhibited by fructose 1,6-bisphosphate (FBP). Key enzyme in the regulation of glycerol uptake and metabolism. Catalyzes the phosphorylation of glycerol to yield sn-glycerol 3-phosphate. In Pseudomonas fluorescens (strain ATCC BAA-477 / NRRL B-23932 / Pf-5), this protein is Glycerol kinase.